We begin with the raw amino-acid sequence, 282 residues long: Probable endonuclease 4 (282 aa).

Zn(2+) is bound by residues His69, His109, Glu145, Asp179, His182, His216, Asp229, His231, and Glu261.

This sequence belongs to the AP endonuclease 2 family. Zn(2+) is required as a cofactor.

The enzyme catalyses Endonucleolytic cleavage to 5'-phosphooligonucleotide end-products.. Its function is as follows. Endonuclease IV plays a role in DNA repair. It cleaves phosphodiester bonds at apurinic or apyrimidinic (AP) sites, generating a 3'-hydroxyl group and a 5'-terminal sugar phosphate. This is Probable endonuclease 4 from Campylobacter hominis (strain ATCC BAA-381 / DSM 21671 / CCUG 45161 / LMG 19568 / NCTC 13146 / CH001A).